The chain runs to 211 residues: 2,3-bisphosphoglycerate-dependent phosphoglycerate mutase (211 aa).

Residues 9–16, 22–23, Arg-61, 88–91, Lys-99, 115–116, and 159–160 contribute to the substrate site; these read RHGQSDWN, TG, ERDY, RR, and GN. The active-site Tele-phosphohistidine intermediate is the His-10. Glu-88 serves as the catalytic Proton donor/acceptor.

The protein belongs to the phosphoglycerate mutase family. BPG-dependent PGAM subfamily. As to quaternary structure, homodimer.

The catalysed reaction is (2R)-2-phosphoglycerate = (2R)-3-phosphoglycerate. It functions in the pathway carbohydrate degradation; glycolysis; pyruvate from D-glyceraldehyde 3-phosphate: step 3/5. Its function is as follows. Catalyzes the interconversion of 2-phosphoglycerate and 3-phosphoglycerate. In Rhizobium etli (strain CIAT 652), this protein is 2,3-bisphosphoglycerate-dependent phosphoglycerate mutase.